A 355-amino-acid polypeptide reads, in one-letter code: Ataxin-3 (355 aa).

Met1 is covalently cross-linked (Peptide (Met-Gly) (interchain with G-Cter in ubiquitin)). A Josephin domain is found at 1 to 180 (MESIFHEKQE…DCEADQLLQM (180 aa)). Cys14 (nucleophile) is an active-site residue. His119 acts as the Proton acceptor in catalysis. Asn134 is an active-site residue. A Glycyl lysine isopeptide (Lys-Gly) (interchain with G-Cter in ubiquitin) cross-link involves residue Lys200. Ser219 carries the post-translational modification Phosphoserine. UIM domains lie at 224 to 243 (EDED…IDME) and 244 to 263 (DEEA…SSRS). Polar residues predominate over residues 257–275 (MQGSSRSMCENSPQTSSPD). The disordered stretch occupies residues 257–355 (MQGSSRSMCE…KDNLKAERKK (99 aa)). Phosphoserine is present on residues Ser268, Ser272, and Ser273. The segment covering 279–289 (EELRRRREAYF) has biased composition (basic and acidic residues). At Ser321 the chain carries Phosphoserine. A UIM 3 domain is found at 329–348 (SEEDMLRAAVTMSLETAKDN). Basic and acidic residues predominate over residues 344 to 355 (TAKDNLKAERKK).

In terms of assembly, interacts with STUB1/CHIP (when monoubiquitinated). Interacts with DNA repair proteins RAD23A and RAD23B. Interacts with BECN1 (via its poly-Gln domain). Interacts with PRKN, UBR2, VCP and tubulin. Monoubiquitinated by UBE2W, possibly leading to activate the deubiquitinating enzyme activity.

The protein resides in the nucleus matrix. Its subcellular location is the nucleus. It localises to the lysosome membrane. It catalyses the reaction Thiol-dependent hydrolysis of ester, thioester, amide, peptide and isopeptide bonds formed by the C-terminal Gly of ubiquitin (a 76-residue protein attached to proteins as an intracellular targeting signal).. In terms of biological role, deubiquitinating enzyme involved in protein homeostasis maintenance, transcription, cytoskeleton regulation, myogenesis and degradation of misfolded chaperone substrates. Binds long polyubiquitin chains and trims them, while it has weak or no activity against chains of 4 or less ubiquitins. Involved in degradation of misfolded chaperone substrates via its interaction with STUB1/CHIP: recruited to monoubiquitinated STUB1/CHIP, and restricts the length of ubiquitin chain attached to STUB1/CHIP substrates and preventing further chain extension. Interacts with key regulators of transcription and represses transcription: acts as a histone-binding protein that regulates transcription. Acts as a negative regulator of mTORC1 signaling in response to amino acid deprivation by mediating deubiquitination of RHEB, thereby promoting RHEB inactivation by the TSC-TBC complex. Regulates autophagy via the deubiquitination of 'Lys-402' of BECN1 leading to the stabilization of BECN1. The sequence is that of Ataxin-3 (Atxn3) from Mus musculus (Mouse).